A 1427-amino-acid chain; its full sequence is Multidrug resistance-associated protein 5 (1427 aa).

Residues 1–147 (MPSDSEEVCL…IYRFISTRLW (147 aa)) are Cytoplasmic-facing. A helical membrane pass occupies residues 148–168 (FSCAVFFFCLIFGFIGPTCFI). One can recognise an ABC transmembrane type-1 1 domain in the interval 151 to 432 (AVFFFCLIFG…IPYGSRYLAE (282 aa)). Residues 169–185 (RRLIAFAENPERDEQSR) are Extracellular-facing. The chain crosses the membrane as a helical span at residues 186–206 (IVYSYGIALVAAISVVEFARV). The Cytoplasmic segment spans residues 207-268 (LSYGATWAVS…RLFDAVTFAP (62 aa)). The helical transmembrane segment at 269 to 289 (LVLVGPLVLVGGIGYLLMVIG) threads the bilayer. R290 is a topological domain (extracellular). Residues 291–311 (WSLLGILVFFVFDVIQFGLGK) form a helical membrane-spanning segment. Over 312-375 (SMVACRNLAI…RKSGYAQSLA (64 aa)) the chain is Cytoplasmic. Residues 376–396 (IACGPVVPVVAAILTFVGVVL) traverse the membrane as a helical segment. Residues 397-399 (AGN) are Extracellular-facing. The chain crosses the membrane as a helical span at residues 400–420 (DLLASDAFSAITVYFVMLFGI). At 421–770 (RMIPYGSRYL…TIAWRIYKQY (350 aa)) the chain is on the cytoplasmic side. In terms of domain architecture, ABC transporter 1 spans 486–707 (PTENEVIVVE…NDAYKTFVDA (222 aa)). Position 518–525 (518–525 (GAVGCGKS)) interacts with ATP. A helical transmembrane segment spans residues 771–791 (IHAAGGWPIWTCLVIGFIVNV). Residues 783 to 1078 (LVIGFIVNVV…AVRTQTELEA (296 aa)) form the ABC transmembrane type-1 2 domain. Over 792–833 (VSNIFSTYWLSRWLKKGHDETTTITNGTEFLEMKTSLADSPV) the chain is Extracellular. An N-linked (GlcNAc...) asparagine glycan is attached at N817. A helical transmembrane segment spans residues 834–854 (TGFYAAVYLVALVVLTISGLF). Residues 855-909 (KACVFVKVSLTAATRLHDRMFQAVIHGATSFFDSTPTGRILNRFSKDMDEIDVKL) lie on the Cytoplasmic side of the membrane. Residues 910–930 (PFTAEVFLQNMITCLGFLVVI) traverse the membrane as a helical segment. T931 is a topological domain (extracellular). Residues 932–952 (SVFPYFLLFAIPLFVVFVVFV) form a helical membrane-spanning segment. Residues 953-1022 (SCFRAGIRNL…MFQSAMRWLA (70 aa)) lie on the Cytoplasmic side of the membrane. Residues 1023-1043 (VWLDLLVVVMTAIVALLTVML) form a helical membrane-spanning segment. Residues 1044–1049 (TGTVSP) are Extracellular-facing. Residues 1050–1070 (ADAGMAIAFAVQMSGIFQFAV) form a helical membrane-spanning segment. Over 1071 to 1427 (RTQTELEAKM…SSDTDIEVVQ (357 aa)) the chain is Cytoplasmic. The ABC transporter 2 domain maps to 1117–1351 (INFSEVNLRY…DWSVYKLEDK (235 aa)). Residue 1151 to 1158 (GRTGSGKS) participates in ATP binding. The interval 1361–1427 (VGENSEHSME…SSDTDIEVVQ (67 aa)) is disordered. Positions 1382 to 1418 (DIVKVENEQKDSSDDVVHIESGDDDVKADSSEVKETS) are enriched in basic and acidic residues.

The protein belongs to the ABC transporter superfamily. ABCC family. Conjugate transporter (TC 3.A.1.208) subfamily. As to expression, highly expressed in the intestine and pharynx. Expressed at low levels in the hypodermis and in some neurons.

The protein localises to the basolateral cell membrane. In terms of biological role, heme transporter required for the export of intestinal heme to different tissues and subcellular compartments. Also, required for the export of vitamin B12 from the intestine of the mother to the embryo to support embryonic development. This is Multidrug resistance-associated protein 5 from Caenorhabditis elegans.